We begin with the raw amino-acid sequence, 60 residues long: Probable tautomerase SP_1017 (60 aa).

Residue Pro2 is the Proton acceptor; via imino nitrogen of the active site.

The protein belongs to the 4-oxalocrotonate tautomerase family.

The sequence is that of Probable tautomerase SP_1017 from Streptococcus pneumoniae serotype 4 (strain ATCC BAA-334 / TIGR4).